The primary structure comprises 459 residues: LETM1 domain-containing protein LETM2, mitochondrial (459 aa).

A mitochondrion-targeting transit peptide spans M1–P25. Over C26–R176 the chain is Mitochondrial intermembrane. A disordered region spans residues G88–V114. Residues E97–Q111 show a composition bias toward basic and acidic residues. The helical transmembrane segment at L177–L197 threads the bilayer. Residues K198 to A459 are Mitochondrial matrix-facing. Residues K220–I440 enclose the Letm1 RBD domain. The interval L403–A459 is disordered. Residues L435–A459 are compositionally biased toward polar residues.

Testis and sperm.

It localises to the mitochondrion inner membrane. In Rattus norvegicus (Rat), this protein is LETM1 domain-containing protein LETM2, mitochondrial (Letm2).